Consider the following 307-residue polypeptide: Agmatinase (307 aa).

Mn(2+) is bound by residues histidine 128, aspartate 151, histidine 153, aspartate 155, aspartate 232, and aspartate 234.

This sequence belongs to the arginase family. Agmatinase subfamily. Mn(2+) is required as a cofactor.

It carries out the reaction agmatine + H2O = urea + putrescine. Its pathway is amine and polyamine biosynthesis; putrescine biosynthesis via agmatine pathway; putrescine from agmatine: step 1/1. Catalyzes the formation of putrescine from agmatine. This chain is Agmatinase, found in Photorhabdus laumondii subsp. laumondii (strain DSM 15139 / CIP 105565 / TT01) (Photorhabdus luminescens subsp. laumondii).